A 217-amino-acid polypeptide reads, in one-letter code: 3,4-dihydroxy-2-butanone 4-phosphate synthase (217 aa).

D-ribulose 5-phosphate contacts are provided by residues 37 to 38, aspartate 42, 150 to 154, and glutamate 174; these read RE and RRGHT. Residue glutamate 38 coordinates Mg(2+). Position 153 (histidine 153) interacts with Mg(2+).

The protein belongs to the DHBP synthase family. In terms of assembly, homodimer. It depends on Mg(2+) as a cofactor. Mn(2+) serves as cofactor.

The enzyme catalyses D-ribulose 5-phosphate = (2S)-2-hydroxy-3-oxobutyl phosphate + formate + H(+). It participates in cofactor biosynthesis; riboflavin biosynthesis; 2-hydroxy-3-oxobutyl phosphate from D-ribulose 5-phosphate: step 1/1. In terms of biological role, catalyzes the conversion of D-ribulose 5-phosphate to formate and 3,4-dihydroxy-2-butanone 4-phosphate. The polypeptide is 3,4-dihydroxy-2-butanone 4-phosphate synthase (Shewanella woodyi (strain ATCC 51908 / MS32)).